Consider the following 418-residue polypeptide: Glutamyl-tRNA reductase (418 aa).

Residues 49–52 (TCNR), S109, 114–116 (EPQ), and Q120 contribute to the substrate site. The Nucleophile role is filled by C50. 189-194 (GAGETI) provides a ligand contact to NADP(+).

The protein belongs to the glutamyl-tRNA reductase family. Homodimer.

The catalysed reaction is (S)-4-amino-5-oxopentanoate + tRNA(Glu) + NADP(+) = L-glutamyl-tRNA(Glu) + NADPH + H(+). It functions in the pathway porphyrin-containing compound metabolism; protoporphyrin-IX biosynthesis; 5-aminolevulinate from L-glutamyl-tRNA(Glu): step 1/2. Functionally, catalyzes the NADPH-dependent reduction of glutamyl-tRNA(Glu) to glutamate 1-semialdehyde (GSA). This is Glutamyl-tRNA reductase from Escherichia coli O45:K1 (strain S88 / ExPEC).